We begin with the raw amino-acid sequence, 320 residues long: Ferrochelatase (320 aa).

Fe cation-binding residues include histidine 194 and glutamate 275.

It belongs to the ferrochelatase family.

Its subcellular location is the cytoplasm. The catalysed reaction is heme b + 2 H(+) = protoporphyrin IX + Fe(2+). It functions in the pathway porphyrin-containing compound metabolism; protoheme biosynthesis; protoheme from protoporphyrin-IX: step 1/1. In terms of biological role, catalyzes the ferrous insertion into protoporphyrin IX. This Xylella fastidiosa (strain M12) protein is Ferrochelatase.